A 556-amino-acid polypeptide reads, in one-letter code: PTS system fructose-specific EIIB'BC component (556 aa).

PTS EIIB type-2 domains are found at residues 1-85 and 106-201; these read MKLF…LANG and IVAV…KAFK. Cys-112 functions as the Phosphocysteine intermediate; for EIIB activity in the catalytic mechanism. Cys-112 is subject to Phosphocysteine; by EIIA. One can recognise a PTS EIIC type-2 domain in the interval 224–556; that stretch reads VYKHLMTGVS…AIIKSKNNAE (333 aa). Helical transmembrane passes span 237-257, 275-295, 302-322, 324-344, 349-369, 390-410, 431-451, 468-488, 490-510, and 529-549; these read PLVV…FNVI, SGVA…FSIA, VGLI…GGII, GFLA…PASL, PILI…IYLI, VNAI…MGGP, MAAA…ATWI, FVLG…ADPI, VIIS…GLNI, and LKYL…YAII.

Its subcellular location is the cell inner membrane. It carries out the reaction D-fructose(out) + N(pros)-phospho-L-histidyl-[protein] = D-fructose 1-phosphate(in) + L-histidyl-[protein]. Functionally, the phosphoenolpyruvate-dependent sugar phosphotransferase system (sugar PTS), a major carbohydrate active transport system, catalyzes the phosphorylation of incoming sugar substrates concomitantly with their translocation across the cell membrane. The enzyme II FruAB PTS system is involved in fructose transport. The chain is PTS system fructose-specific EIIB'BC component from Haemophilus influenzae (strain ATCC 51907 / DSM 11121 / KW20 / Rd).